The primary structure comprises 315 residues: Protoheme IX farnesyltransferase (315 aa).

9 consecutive transmembrane segments (helical) span residues 32–52, 53–73, 93–113, 120–140, 153–173, 180–200, 226–246, 249–269, and 295–315; these read VMSL…GHMN, PVLA…SGAL, IPAG…LSAF, LMVN…YAVI, IVIG…AATG, LVLF…LSLF, ALFY…MGFA, FYGV…WRLW, and IFAV…FGVF.

Belongs to the UbiA prenyltransferase family. Protoheme IX farnesyltransferase subfamily.

The protein resides in the cell inner membrane. It carries out the reaction heme b + (2E,6E)-farnesyl diphosphate + H2O = Fe(II)-heme o + diphosphate. It functions in the pathway porphyrin-containing compound metabolism; heme O biosynthesis; heme O from protoheme: step 1/1. Its function is as follows. Converts heme B (protoheme IX) to heme O by substitution of the vinyl group on carbon 2 of heme B porphyrin ring with a hydroxyethyl farnesyl side group. This chain is Protoheme IX farnesyltransferase, found in Brucella canis (strain ATCC 23365 / NCTC 10854 / RM-666).